Consider the following 309-residue polypeptide: L-2-keto-3-deoxyarabonate dehydratase (309 aa).

Residue Lys171 is the Schiff-base intermediate with substrate of the active site.

This sequence belongs to the DapA family. Homodimer.

The catalysed reaction is 2-dehydro-3-deoxy-L-arabinonate = 2,5-dioxopentanoate + H2O. Its function is as follows. Catalyzes the dehydration of L-2-keto-3-deoxyarabonate (L-KDA) to alpha-ketoglutaric semialdehyde (alphaKGSA). Is involved in a degradation pathway of L-arabinose that allows A.brasilense to grow on L-arabinose as a sole carbon source. The chain is L-2-keto-3-deoxyarabonate dehydratase (araD) from Azospirillum brasilense.